Consider the following 518-residue polypeptide: NADH-quinone oxidoreductase subunit N (518 aa).

Transmembrane regions (helical) follow at residues Phe18–Phe38, Val45–Ile65, Ala82–Ala102, Ile113–Ala133, Leu136–Phe156, Val171–Leu191, Val220–Val240, Pro254–Ile274, Leu295–Gly315, Leu328–Ser348, Val355–Leu375, Ala399–Val419, Trp439–Val459, and Val486–Val506.

The protein belongs to the complex I subunit 2 family. In terms of assembly, NDH-1 is composed of 14 different subunits. Subunits NuoA, H, J, K, L, M, N constitute the membrane sector of the complex.

It is found in the cell inner membrane. The enzyme catalyses a quinone + NADH + 5 H(+)(in) = a quinol + NAD(+) + 4 H(+)(out). Its function is as follows. NDH-1 shuttles electrons from NADH, via FMN and iron-sulfur (Fe-S) centers, to quinones in the respiratory chain. The immediate electron acceptor for the enzyme in this species is believed to be ubiquinone. Couples the redox reaction to proton translocation (for every two electrons transferred, four hydrogen ions are translocated across the cytoplasmic membrane), and thus conserves the redox energy in a proton gradient. This chain is NADH-quinone oxidoreductase subunit N, found in Anaeromyxobacter sp. (strain Fw109-5).